Here is a 63-residue protein sequence, read N- to C-terminus: Ferredoxin (63 aa).

A 4Fe-4S ferredoxin-type domain is found at 2 to 29 (KVTVDQDLCIACGTCIDLCPSVFDWDDE). Cysteine 10, cysteine 13, cysteine 16, and cysteine 55 together coordinate [4Fe-4S] cluster.

[4Fe-4S] cluster is required as a cofactor.

Functionally, ferredoxins are iron-sulfur proteins that transfer electrons in a wide variety of metabolic reactions. This is Ferredoxin from Moorella thermoacetica (Clostridium thermoaceticum).